Reading from the N-terminus, the 337-residue chain is Terpene cyclase (337 aa).

Residues 5–25 (ASVIFLSLSVLAAVGVWGPFV) traverse the membrane as a helical segment. Residue Asn65 is glycosylated (N-linked (GlcNAc...) asparagine). A run of 7 helical transmembrane segments spans residues 72-92 (IAYCFMMQFLANVAVIPVILC), 111-131 (GLLSQLGTSAVIYPLYAMSFI), 149-169 (ALILNMAMGYALPAAITLNVL), 177-197 (IWGILAFTVYPICMKLMARII), 222-242 (VAGGVALQGHLWYLGTELGIF), 267-287 (LQVDYAITFLAMLLLAWHELI), and 298-318 (LGGLIIGWILVGPGATLAAAW).

This sequence belongs to the membrane-bound ascI terpene cyclase family.

It localises to the membrane. It functions in the pathway antifungal biosynthesis. In terms of biological role, cyclase; part of the gene cluster that mediates the biosynthesis of the tetrahydropyranyl antifungal agent lanomycin that acts as an inhibitor of CYP51 and blocks the ergosterol biosynthesis. The biosynthesis probably begins with the formation of an hexaketide, followed by methionine mediated alkylation of C-2 and C-6, and methylation of the reduced C-3 oxygen, pyran forming reductive ring closure, oxygenation of C-4, beta-keto reduction, enoyl reduction and dehydration of the remaining oxygens, and finally, acylation with glycine to complete the biosynthesis. This is Terpene cyclase from Pyrenophora dematioidea (Helminthosporium dematioideum).